Reading from the N-terminus, the 282-residue chain is Probable protein phosphatase 2C 10 (282 aa).

The region spanning 34 to 281 (KFGYSLVKGK…DDISCIVVRL (248 aa)) is the PPM-type phosphatase domain. 4 residues coordinate Mn(2+): D71, G72, D233, and D272.

Belongs to the PP2C family. The cofactor is Mg(2+). It depends on Mn(2+) as a cofactor.

The enzyme catalyses O-phospho-L-seryl-[protein] + H2O = L-seryl-[protein] + phosphate. It carries out the reaction O-phospho-L-threonyl-[protein] + H2O = L-threonyl-[protein] + phosphate. In Arabidopsis thaliana (Mouse-ear cress), this protein is Probable protein phosphatase 2C 10.